The primary structure comprises 249 residues: Protein twisted gastrulation (249 aa).

An N-terminal signal peptide occupies residues 1–23 (MQLLCYFVILFVGIAPWSSLAND). N199 carries N-linked (GlcNAc...) asparagine glycosylation.

Belongs to the twisted gastrulation protein family. In terms of assembly, component of a complex composed of dpp, sog and tsg. First appears in stage 4 embryos, expressed in two domains: a broad mid-dorsal saddle and an anterior cap, expression between the domains is continuous across the dorsal midline. At stage 5, expression is refined into 4 graded stripes in the mid-dorsal region and a paired domain in the anterior region. During stages 7 and 8, anterior expression fades and the mid dorsal stripes are located between the anterior and posterior transverse furrow (ATF and PTF). Expressing cells become incorporated into the deepening PTF.

The protein localises to the secreted. Involved in dorsal-ventral patterning. Required for specification of a narrow strip of dorsal midline cells that will give rise to the amnioserosa, but not for specification of dorsal ectoderm cells. Inhibits BMP signaling; enhances the binding of sog to dpp, thus enhancing the antagonistic activity of sog. This chain is Protein twisted gastrulation (tsg), found in Drosophila melanogaster (Fruit fly).